The following is a 141-amino-acid chain: D-aminoacyl-tRNA deacylase (141 aa).

The Gly-cisPro motif, important for rejection of L-amino acids motif lies at 133 to 134 (GP).

The protein belongs to the DTD family. As to quaternary structure, homodimer.

The protein resides in the cytoplasm. It catalyses the reaction glycyl-tRNA(Ala) + H2O = tRNA(Ala) + glycine + H(+). The enzyme catalyses a D-aminoacyl-tRNA + H2O = a tRNA + a D-alpha-amino acid + H(+). Functionally, an aminoacyl-tRNA editing enzyme that deacylates mischarged D-aminoacyl-tRNAs. Also deacylates mischarged glycyl-tRNA(Ala), protecting cells against glycine mischarging by AlaRS. Acts via tRNA-based rather than protein-based catalysis; rejects L-amino acids rather than detecting D-amino acids in the active site. By recycling D-aminoacyl-tRNA to D-amino acids and free tRNA molecules, this enzyme counteracts the toxicity associated with the formation of D-aminoacyl-tRNA entities in vivo and helps enforce protein L-homochirality. The sequence is that of D-aminoacyl-tRNA deacylase from Thermobifida fusca (strain YX).